A 476-amino-acid chain; its full sequence is Small ribosomal subunit protein mS29 (476 aa).

The N-terminal 54 residues, 1–54 (MLPKFRSRSSIIKNTERISNILSGGKLTVCGSKLGGLYTFEKCTFNKYYSSSQY), are a transit peptide targeting the mitochondrion. The interval 58–97 (GRPVGGNIHSSSNQQRQKNSEAPRINEIPPSTSSVEKSTT) is disordered. Polar residues-rich tracts occupy residues 65–74 (IHSSSNQQRQ) and 86–97 (PPSTSSVEKSTT). 200–207 (GAPGSGRS) contacts ATP.

Belongs to the mitochondrion-specific ribosomal protein mS29 family. As to quaternary structure, component of the mitochondrial small ribosomal subunit (mt-SSU). Mature yeast 74S mitochondrial ribosomes consist of a small (37S) and a large (54S) subunit. The 37S small subunit contains a 15S ribosomal RNA (15S mt-rRNA) and at least 32 different proteins. The 54S large subunit contains a 21S rRNA (21S mt-rRNA) and at least 45 different proteins.

It is found in the mitochondrion. Its function is as follows. Component of the mitochondrial ribosome (mitoribosome), a dedicated translation machinery responsible for the synthesis of mitochondrial genome-encoded proteins, including at least some of the essential transmembrane subunits of the mitochondrial respiratory chain. The mitoribosomes are attached to the mitochondrial inner membrane and translation products are cotranslationally integrated into the membrane. mS29 binds GTP and is probably an active GTPase. GTP hydrolysis may be linked to subunit association. mS29 also has an extraribosomal function, being required for maintenance of mitochondrial DNA. This chain is Small ribosomal subunit protein mS29 (rsm23), found in Schizosaccharomyces pombe (strain 972 / ATCC 24843) (Fission yeast).